A 154-amino-acid polypeptide reads, in one-letter code: Transcriptional repressor NrdR (154 aa).

Residues 3-34 (CPFCGANDTKVIDSRLVAEGEQVRRRRECLAC) fold into a zinc finger. The 91-residue stretch at 49 to 139 (PRLIKTDGSR…VYRRFQDLNE (91 aa)) folds into the ATP-cone domain.

It belongs to the NrdR family. Zn(2+) is required as a cofactor.

In terms of biological role, negatively regulates transcription of bacterial ribonucleotide reductase nrd genes and operons by binding to NrdR-boxes. The chain is Transcriptional repressor NrdR from Pseudomonas fluorescens (strain ATCC BAA-477 / NRRL B-23932 / Pf-5).